We begin with the raw amino-acid sequence, 198 residues long: Protein GrpE (198 aa).

Belongs to the GrpE family. Homodimer.

Its subcellular location is the cytoplasm. Its function is as follows. Participates actively in the response to hyperosmotic and heat shock by preventing the aggregation of stress-denatured proteins, in association with DnaK and GrpE. It is the nucleotide exchange factor for DnaK and may function as a thermosensor. Unfolded proteins bind initially to DnaJ; upon interaction with the DnaJ-bound protein, DnaK hydrolyzes its bound ATP, resulting in the formation of a stable complex. GrpE releases ADP from DnaK; ATP binding to DnaK triggers the release of the substrate protein, thus completing the reaction cycle. Several rounds of ATP-dependent interactions between DnaJ, DnaK and GrpE are required for fully efficient folding. The chain is Protein GrpE from Lysinibacillus sphaericus (Bacillus sphaericus).